Here is a 509-residue protein sequence, read N- to C-terminus: ATP synthase subunit alpha (509 aa).

Residue G171–T178 coordinates ATP.

Belongs to the ATPase alpha/beta chains family. As to quaternary structure, F-type ATPases have 2 components, CF(1) - the catalytic core - and CF(0) - the membrane proton channel. CF(1) has five subunits: alpha(3), beta(3), gamma(1), delta(1), epsilon(1). CF(0) has three main subunits: a(1), b(2) and c(9-12). The alpha and beta chains form an alternating ring which encloses part of the gamma chain. CF(1) is attached to CF(0) by a central stalk formed by the gamma and epsilon chains, while a peripheral stalk is formed by the delta and b chains.

It localises to the cell inner membrane. The catalysed reaction is ATP + H2O + 4 H(+)(in) = ADP + phosphate + 5 H(+)(out). Functionally, produces ATP from ADP in the presence of a proton gradient across the membrane. The alpha chain is a regulatory subunit. The polypeptide is ATP synthase subunit alpha (Ehrlichia chaffeensis (strain ATCC CRL-10679 / Arkansas)).